We begin with the raw amino-acid sequence, 453 residues long: tRNA modification GTPase MnmE (453 aa).

The (6S)-5-formyl-5,6,7,8-tetrahydrofolate site is built by Arg22, Glu79, and Lys119. In terms of domain architecture, TrmE-type G spans 215 to 376; that stretch reads GMKVVIAGRP…LKQHLKSLMG (162 aa). Position 225 (Asn225) interacts with K(+). GTP-binding positions include 225 to 230, 244 to 250, 269 to 272, and 334 to 337; these read NAGKSS, TEIAGTT, DTAG, and NKAD. Ser229 serves as a coordination point for Mg(2+). Positions 244, 246, and 249 each coordinate K(+). Thr250 is a binding site for Mg(2+). (6S)-5-formyl-5,6,7,8-tetrahydrofolate is bound at residue Lys453.

It belongs to the TRAFAC class TrmE-Era-EngA-EngB-Septin-like GTPase superfamily. TrmE GTPase family. In terms of assembly, homodimer. Heterotetramer of two MnmE and two MnmG subunits. The cofactor is K(+).

The protein resides in the cytoplasm. In terms of biological role, exhibits a very high intrinsic GTPase hydrolysis rate. Involved in the addition of a carboxymethylaminomethyl (cmnm) group at the wobble position (U34) of certain tRNAs, forming tRNA-cmnm(5)s(2)U34. The protein is tRNA modification GTPase MnmE of Shewanella baltica (strain OS185).